Consider the following 264-residue polypeptide: Small ribosomal subunit protein uS2 (264 aa).

Belongs to the universal ribosomal protein uS2 family.

This Latilactobacillus sakei subsp. sakei (strain 23K) (Lactobacillus sakei subsp. sakei) protein is Small ribosomal subunit protein uS2.